Here is a 99-residue protein sequence, read N- to C-terminus: Ferredoxin-2 (99 aa).

Residues 4–96 (YQVRLINKKR…DCTIRTHQEA (93 aa)) form the 2Fe-2S ferredoxin-type domain. Cys-42, Cys-47, Cys-50, and Cys-80 together coordinate [2Fe-2S] cluster.

The protein belongs to the 2Fe2S plant-type ferredoxin family. Requires [2Fe-2S] cluster as cofactor.

In terms of biological role, ferredoxins are iron-sulfur proteins that transfer electrons in a wide variety of metabolic reactions. Donates electrons to the nitrogenase. In Leptolyngbya boryana (Plectonema boryanum), this protein is Ferredoxin-2 (fdxH).